Consider the following 90-residue polypeptide: Small ribosomal subunit protein bS20 (90 aa).

It belongs to the bacterial ribosomal protein bS20 family.

In terms of biological role, binds directly to 16S ribosomal RNA. The sequence is that of Small ribosomal subunit protein bS20 from Acidiphilium cryptum (strain JF-5).